Reading from the N-terminus, the 418-residue chain is Isocitrate dehydrogenase [NADP] (418 aa).

T106 serves as a coordination point for NADP(+). D-threo-isocitrate contacts are provided by S115, N117, R121, R131, and R155. S115 carries the post-translational modification Phosphoserine. At T193 the chain carries Phosphothreonine. D309 is a binding site for Mg(2+). Residues 341-347 (HGTAPKY), N354, Y393, and R397 each bind NADP(+).

This sequence belongs to the isocitrate and isopropylmalate dehydrogenases family. In terms of assembly, homodimer. Requires Mg(2+) as cofactor. It depends on Mn(2+) as a cofactor.

It is found in the secreted. The enzyme catalyses D-threo-isocitrate + NADP(+) = 2-oxoglutarate + CO2 + NADPH. Its function is as follows. Catalyzes the oxidative decarboxylation of isocitrate to 2-oxoglutarate and carbon dioxide with the concomitant reduction of NADP(+). This is Isocitrate dehydrogenase [NADP] (icd) from Pseudomonas aeruginosa (strain UCBPP-PA14).